A 354-amino-acid chain; its full sequence is S-adenosylmethionine:tRNA ribosyltransferase-isomerase (354 aa).

Belongs to the QueA family. As to quaternary structure, monomer.

It is found in the cytoplasm. It catalyses the reaction 7-aminomethyl-7-carbaguanosine(34) in tRNA + S-adenosyl-L-methionine = epoxyqueuosine(34) in tRNA + adenine + L-methionine + 2 H(+). The protein operates within tRNA modification; tRNA-queuosine biosynthesis. Transfers and isomerizes the ribose moiety from AdoMet to the 7-aminomethyl group of 7-deazaguanine (preQ1-tRNA) to give epoxyqueuosine (oQ-tRNA). This chain is S-adenosylmethionine:tRNA ribosyltransferase-isomerase, found in Thermosynechococcus vestitus (strain NIES-2133 / IAM M-273 / BP-1).